Reading from the N-terminus, the 303-residue chain is Signal recognition particle receptor FtsY (303 aa).

Residues 108–115 (GVNGAGKT), 190–194 (DTAGR), and 254–257 (TKLD) contribute to the GTP site.

Belongs to the GTP-binding SRP family. FtsY subfamily. In terms of assembly, part of the signal recognition particle protein translocation system, which is composed of SRP and FtsY. SRP is a ribonucleoprotein composed of Ffh and a 4.5S RNA molecule.

It is found in the cell inner membrane. The protein localises to the cytoplasm. The enzyme catalyses GTP + H2O = GDP + phosphate + H(+). Functionally, involved in targeting and insertion of nascent membrane proteins into the cytoplasmic membrane. Acts as a receptor for the complex formed by the signal recognition particle (SRP) and the ribosome-nascent chain (RNC). Interaction with SRP-RNC leads to the transfer of the RNC complex to the Sec translocase for insertion into the membrane, the hydrolysis of GTP by both Ffh and FtsY, and the dissociation of the SRP-FtsY complex into the individual components. The protein is Signal recognition particle receptor FtsY of Rickettsia conorii (strain ATCC VR-613 / Malish 7).